Consider the following 250-residue polypeptide: Putative (5-formylfuran-3-yl)methyl phosphate synthase (250 aa).

Lysine 29 acts as the Schiff-base intermediate with substrate in catalysis. Lysine 87 (proton acceptor) is an active-site residue.

The protein belongs to the MfnB family.

It catalyses the reaction 2 D-glyceraldehyde 3-phosphate = 4-(hydroxymethyl)-2-furancarboxaldehyde phosphate + phosphate + 2 H2O. Functionally, catalyzes the formation of 4-(hydroxymethyl)-2-furancarboxaldehyde phosphate (4-HFC-P) from two molecules of glyceraldehyde-3-P (GA-3-P). The polypeptide is Putative (5-formylfuran-3-yl)methyl phosphate synthase (Streptomyces griseus subsp. griseus (strain JCM 4626 / CBS 651.72 / NBRC 13350 / KCC S-0626 / ISP 5235)).